We begin with the raw amino-acid sequence, 99 residues long: Aspartyl/glutamyl-tRNA(Asn/Gln) amidotransferase subunit C (99 aa).

It belongs to the GatC family. In terms of assembly, heterotrimer of A, B and C subunits.

It catalyses the reaction L-glutamyl-tRNA(Gln) + L-glutamine + ATP + H2O = L-glutaminyl-tRNA(Gln) + L-glutamate + ADP + phosphate + H(+). The enzyme catalyses L-aspartyl-tRNA(Asn) + L-glutamine + ATP + H2O = L-asparaginyl-tRNA(Asn) + L-glutamate + ADP + phosphate + 2 H(+). Allows the formation of correctly charged Asn-tRNA(Asn) or Gln-tRNA(Gln) through the transamidation of misacylated Asp-tRNA(Asn) or Glu-tRNA(Gln) in organisms which lack either or both of asparaginyl-tRNA or glutaminyl-tRNA synthetases. The reaction takes place in the presence of glutamine and ATP through an activated phospho-Asp-tRNA(Asn) or phospho-Glu-tRNA(Gln). This Paraburkholderia xenovorans (strain LB400) protein is Aspartyl/glutamyl-tRNA(Asn/Gln) amidotransferase subunit C.